Reading from the N-terminus, the 180-residue chain is Methionine-R-sulfoxide reductase B2, mitochondrial (180 aa).

The transit peptide at 1–41 directs the protein to the mitochondrion; it reads MSRFLVRLSTVVSKGATGKSVLPQKRIFAGIRLISSSTGLQ. Residues 49-178 form the MsrB domain; it reads STDWQRKLSP…NSVALNFKPR (130 aa). 4 residues coordinate Zn(2+): C88, C91, C144, and C147. C167 (nucleophile) is an active-site residue.

It belongs to the MsrB Met sulfoxide reductase family. Zn(2+) is required as a cofactor.

It is found in the mitochondrion. It catalyses the reaction L-methionyl-[protein] + [thioredoxin]-disulfide + H2O = L-methionyl-(R)-S-oxide-[protein] + [thioredoxin]-dithiol. The enzyme catalyses [thioredoxin]-disulfide + L-methionine + H2O = L-methionine (R)-S-oxide + [thioredoxin]-dithiol. Functionally, methionine-sulfoxide reductase that specifically reduces methionine (R)-sulfoxide back to methionine. While in many cases, methionine oxidation is the result of random oxidation following oxidative stress, methionine oxidation is also a post-translational modification that takes place on specific residue. Upon oxidative stress, may play a role in the preservation of mitochondrial integrity by decreasing the intracellular reactive oxygen species build-up through its scavenging role, hence contributing to cell survival and protein maintenance. The sequence is that of Methionine-R-sulfoxide reductase B2, mitochondrial (msrb2) from Danio rerio (Zebrafish).